The chain runs to 81 residues: Cytotoxin 4 (81 aa).

The first 21 residues, 1–21 (MKTLLLTLVVVTIVCLDLGYT), serve as a signal peptide directing secretion. 4 cysteine pairs are disulfide-bonded: Cys-24–Cys-42, Cys-35–Cys-59, Cys-63–Cys-74, and Cys-75–Cys-80.

It belongs to the three-finger toxin family. Short-chain subfamily. Type IA cytotoxin sub-subfamily. In terms of assembly, monomer in solution; Homodimer and oligomer in the presence of negatively charged lipids forming a pore with a size ranging between 20 and 30 Angstroms. In terms of tissue distribution, expressed by the venom gland.

Its subcellular location is the secreted. The protein resides in the target cell membrane. Its function is as follows. Basic protein that bind to cell membrane and depolarizes cardiomyocytes. This cytotoxin also shows lytic activities, but 2-fold more important than that of CTX-A2. It binds to the integrin alpha-V/beta-3 with a moderate affinity. Inhibits protein kinase C. It may interact with sulfatides in the cell membrane, which induces pore formation and cell internalization and is responsible for cytotoxicity in cardiomyocytes. It may also target the mitochondrial membrane and induces mitochondrial swelling and fragmentation. The sequence is that of Cytotoxin 4 from Naja atra (Chinese cobra).